We begin with the raw amino-acid sequence, 720 residues long: Phosphoribosylformylglycinamidine synthase subunit PurL (720 aa).

His-47 is a catalytic residue. Residues Tyr-50 and Lys-89 each contribute to the ATP site. Glu-91 serves as a coordination point for Mg(2+). Residues 92–95 (SHNH) and Arg-114 each bind substrate. His-93 serves as the catalytic Proton acceptor. Residue Asp-115 participates in Mg(2+) binding. Position 238 (Gln-238) interacts with substrate. A Mg(2+)-binding site is contributed by Asp-266. Residue 310–312 (ESQ) coordinates substrate. Residues Asp-488 and Gly-525 each contribute to the ATP site. Asn-526 serves as a coordination point for Mg(2+). Ser-528 contacts substrate.

This sequence belongs to the FGAMS family. As to quaternary structure, monomer. Part of the FGAM synthase complex composed of 1 PurL, 1 PurQ and 2 PurS subunits.

Its subcellular location is the cytoplasm. The catalysed reaction is N(2)-formyl-N(1)-(5-phospho-beta-D-ribosyl)glycinamide + L-glutamine + ATP + H2O = 2-formamido-N(1)-(5-O-phospho-beta-D-ribosyl)acetamidine + L-glutamate + ADP + phosphate + H(+). Its pathway is purine metabolism; IMP biosynthesis via de novo pathway; 5-amino-1-(5-phospho-D-ribosyl)imidazole from N(2)-formyl-N(1)-(5-phospho-D-ribosyl)glycinamide: step 1/2. In terms of biological role, part of the phosphoribosylformylglycinamidine synthase complex involved in the purines biosynthetic pathway. Catalyzes the ATP-dependent conversion of formylglycinamide ribonucleotide (FGAR) and glutamine to yield formylglycinamidine ribonucleotide (FGAM) and glutamate. The FGAM synthase complex is composed of three subunits. PurQ produces an ammonia molecule by converting glutamine to glutamate. PurL transfers the ammonia molecule to FGAR to form FGAM in an ATP-dependent manner. PurS interacts with PurQ and PurL and is thought to assist in the transfer of the ammonia molecule from PurQ to PurL. The polypeptide is Phosphoribosylformylglycinamidine synthase subunit PurL (Cereibacter sphaeroides (strain ATCC 17023 / DSM 158 / JCM 6121 / CCUG 31486 / LMG 2827 / NBRC 12203 / NCIMB 8253 / ATH 2.4.1.) (Rhodobacter sphaeroides)).